Consider the following 248-residue polypeptide: DNA repair protein RecO (248 aa).

This sequence belongs to the RecO family.

In terms of biological role, involved in DNA repair and RecF pathway recombination. This is DNA repair protein RecO from Bacillus cytotoxicus (strain DSM 22905 / CIP 110041 / 391-98 / NVH 391-98).